The sequence spans 344 residues: Dihydroorotase (344 aa).

Residues histidine 14 and histidine 16 each coordinate Zn(2+). Residues 16–18 (HLR) and asparagine 42 each bind substrate. Zn(2+) is bound by residues lysine 100, histidine 137, and histidine 175. Lysine 100 carries the N6-carboxylysine modification. Histidine 137 contributes to the substrate binding site. Leucine 220 lines the substrate pocket. Aspartate 248 contributes to the Zn(2+) binding site. Aspartate 248 is an active-site residue. Positions 252 and 264 each coordinate substrate.

This sequence belongs to the metallo-dependent hydrolases superfamily. DHOase family. Class II DHOase subfamily. Homodimer. Zn(2+) is required as a cofactor.

It catalyses the reaction (S)-dihydroorotate + H2O = N-carbamoyl-L-aspartate + H(+). Its pathway is pyrimidine metabolism; UMP biosynthesis via de novo pathway; (S)-dihydroorotate from bicarbonate: step 3/3. Catalyzes the reversible cyclization of carbamoyl aspartate to dihydroorotate. This is Dihydroorotase from Ralstonia nicotianae (strain ATCC BAA-1114 / GMI1000) (Ralstonia solanacearum).